A 179-amino-acid polypeptide reads, in one-letter code: Peptide deformylase (179 aa).

Fe cation-binding residues include C102 and H144. The active site involves E145. H148 provides a ligand contact to Fe cation.

Belongs to the polypeptide deformylase family. Requires Fe(2+) as cofactor.

The catalysed reaction is N-terminal N-formyl-L-methionyl-[peptide] + H2O = N-terminal L-methionyl-[peptide] + formate. Functionally, removes the formyl group from the N-terminal Met of newly synthesized proteins. Requires at least a dipeptide for an efficient rate of reaction. N-terminal L-methionine is a prerequisite for activity but the enzyme has broad specificity at other positions. The chain is Peptide deformylase from Wolbachia sp. subsp. Drosophila simulans (strain wRi).